The chain runs to 495 residues: Phosphomethylpyrimidine synthase (495 aa).

Substrate-binding positions include N125, M154, Y183, H219, 239 to 241 (SRG), 280 to 283 (DGLR), and E319. H323 contributes to the Zn(2+) binding site. Y346 contributes to the substrate binding site. A Zn(2+)-binding site is contributed by H387. Positions 467, 470, and 475 each coordinate [4Fe-4S] cluster.

This sequence belongs to the ThiC family. It depends on [4Fe-4S] cluster as a cofactor.

The catalysed reaction is 5-amino-1-(5-phospho-beta-D-ribosyl)imidazole + S-adenosyl-L-methionine = 4-amino-2-methyl-5-(phosphooxymethyl)pyrimidine + CO + 5'-deoxyadenosine + formate + L-methionine + 3 H(+). The protein operates within cofactor biosynthesis; thiamine diphosphate biosynthesis. Functionally, catalyzes the synthesis of the hydroxymethylpyrimidine phosphate (HMP-P) moiety of thiamine from aminoimidazole ribotide (AIR) in a radical S-adenosyl-L-methionine (SAM)-dependent reaction. The polypeptide is Phosphomethylpyrimidine synthase (Leptospira interrogans serogroup Icterohaemorrhagiae serovar copenhageni (strain Fiocruz L1-130)).